We begin with the raw amino-acid sequence, 419 residues long: ADIPOR-like receptor IZH3 (419 aa).

Residues 1–65 are disordered; the sequence is MSHPNTHMPR…GEAGGGRSVL (65 aa). Topologically, residues 1–147 are lumenal; that stretch reads MSHPNTHMPR…LNAYGWHNET (147 aa). A glycan (N-linked (GlcNAc...) asparagine) is linked at Asn145. Residues 148–168 form a helical membrane-spanning segment; the sequence is INIWSHLVGAAVLAYLLCWGW. Residues 169-184 are Cytoplasmic-facing; it reads PRSDVYRAAQVPRLAK. A helical membrane pass occupies residues 185–205; the sequence is WAIGAFLACGVKCMASSVAWH. The Lumenal segment spans residues 206–225; that stretch reads TFNGTCHLKLRSRFVCVDYT. An N-linked (GlcNAc...) asparagine glycan is attached at Asn208. The chain crosses the membrane as a helical span at residues 226–246; that stretch reads GITLLVTASVVTTVAVTLYGL. At 247–249 the chain is on the cytoplasmic side; it reads SRP. A helical transmembrane segment spans residues 250-270; it reads LMYAYMVASIGLGTAAGVMNW. The Lumenal segment spans residues 271 to 283; that stretch reads SPHFDRPEARPLR. Residues 284 to 304 traverse the membrane as a helical segment; it reads IAVYVGLAALGLVSFVHVWMQ. The Cytoplasmic segment spans residues 305-311; it reads VRWASAH. Residues 312–332 traverse the membrane as a helical segment; that stretch reads LMAPLVYKSLVWYGIGVVFYA. Over 333 to 377 the chain is Lumenal; the sequence is TLVPERWRSDVTLDCCSGPVHEAACRQFRDLPPVARKDRQFWSLW. The chain crosses the membrane as a helical span at residues 378–398; that stretch reads WVDYFCHSHFLWHVFVVLGVV. Residues 399 to 419 lie on the Cytoplasmic side of the membrane; sequence GHYRAVLQMSRIVWLDAGRAF.

Belongs to the ADIPOR family.

The protein resides in the endoplasmic reticulum membrane. In terms of biological role, ADIPOR-like receptor involved in zinc metabolism either by altering membrane sterol content or by directly altering cellular zinc levels. In Eremothecium gossypii (strain ATCC 10895 / CBS 109.51 / FGSC 9923 / NRRL Y-1056) (Yeast), this protein is ADIPOR-like receptor IZH3 (IZH3).